Consider the following 1098-residue polypeptide: Probable arabinosyltransferase B (1098 aa).

The next 12 membrane-spanning stretches (helical) occupy residues 28–50 (WVATIAGLIGFVLSVATPLLPVV), 217–239 (LKLLAIIGAIVATVVALIALWRL), 271–293 (ASWRTFTLTDAVVIFGFLLWHVI), 402–419 (LRPEGIIALGSLVTYVLI), 434–456 (AVVTAAFTLGVQPTGLIAVAALV), 472–494 (LVGTLPLVSPMLAAGTVILTVVF), 541–558 (FGFLITALCLFTAVFIML), 570–587 (PAWRLMGVIFGTMFFLMF), 597–619 (GLFAAVGAAMAALTTVLVSPSVL), 626–648 (MAFLAALFFLLALCWATTNGWWY), 663–685 (IDGITVSTIFFALFAIAAGYAAW), and 698–720 (LIRALTTAPVPIVAGFMAAVFVA).

It belongs to the emb family.

It localises to the cell membrane. In terms of biological role, arabinosyl transferase responsible for the polymerization of arabinose into the arabinan of arabinogalactan. This Mycobacterium tuberculosis (strain CDC 1551 / Oshkosh) protein is Probable arabinosyltransferase B (embB).